The sequence spans 396 residues: Ribosomal RNA large subunit methyltransferase I (396 aa).

The 80-residue stretch at 2 to 81 (TVSIYLAKGR…EAIDKDFFVR (80 aa)) folds into the PUA domain.

The protein belongs to the methyltransferase superfamily. RlmI family.

Its subcellular location is the cytoplasm. It catalyses the reaction cytidine(1962) in 23S rRNA + S-adenosyl-L-methionine = 5-methylcytidine(1962) in 23S rRNA + S-adenosyl-L-homocysteine + H(+). Specifically methylates the cytosine at position 1962 (m5C1962) of 23S rRNA. In Aliivibrio fischeri (strain MJ11) (Vibrio fischeri), this protein is Ribosomal RNA large subunit methyltransferase I.